Reading from the N-terminus, the 131-residue chain is L-ectoine synthase (131 aa).

Belongs to the ectoine synthase family.

It catalyses the reaction (2S)-4-acetamido-2-aminobutanoate = L-ectoine + H2O. Its pathway is amine and polyamine biosynthesis; ectoine biosynthesis; L-ectoine from L-aspartate 4-semialdehyde: step 3/3. In terms of biological role, catalyzes the circularization of gamma-N-acetyl-alpha,gamma-diaminobutyric acid (ADABA) to ectoine (1,4,5,6-tetrahydro-2-methyl-4-pyrimidine carboxylic acid), which is an excellent osmoprotectant. The polypeptide is L-ectoine synthase (Bordetella bronchiseptica (strain ATCC BAA-588 / NCTC 13252 / RB50) (Alcaligenes bronchisepticus)).